Consider the following 389-residue polypeptide: bZIP transcription factor 68 (389 aa).

Basic and acidic residues predominate over residues 1 to 16; that stretch reads MGSSEMEKSGKEKEPK. Disordered regions lie at residues 1 to 42, 124 to 154, 170 to 236, 285 to 318, and 356 to 389; these read MGSS…VSAG, MAEA…KRSK, AGKN…NLPV, QPWL…RKQA, and SSLK…QDVA. A compositionally biased stretch (low complexity) spans 19 to 32; the sequence is PPSTSSSAPATVVS. Residues 137-149 are compositionally biased toward basic and acidic residues; the sequence is GDGKPSDGKEKLP. Lysine 154 participates in a covalent cross-link: Glycyl lysine isopeptide (Lys-Gly) (interchain with G-Cter in ubiquitin). Over residues 170–205 the composition is skewed to low complexity; it reads AGKNSGASANGACSKSAESGSDGSSDGSDANSQNDS. Composition is skewed to basic and acidic residues over residues 206-215 and 304-318; these read GSRHNGKDGE and SNRE…RKQA. The 64-residue stretch at 295-358 folds into the bZIP domain; the sequence is EIKRQRRKQS…EELLAENSSL (64 aa). Residues 297-316 are basic motif; that stretch reads KRQRRKQSNRESARRSRLRK. The segment at 323–358 is leucine-zipper; the sequence is LAQRAEVLNGENSSLRAEINKLKSQYEELLAENSSL. The span at 356-366 shows a compositional bias: polar residues; it reads SSLKNKFSSAP. A compositionally biased stretch (basic and acidic residues) spans 372-389; the sequence is DLDKNEQEPQRSTRQDVA.

This sequence belongs to the bZIP family. In terms of assembly, monomer, homodimer and heterodimers with GBF1/BZIP41, GBF2/BZIP54 and GBF3/BZIP55. Heterodimers with BZIP16. Interacts with GIP1.

The protein resides in the nucleus. Transcriptional activator that binds to the G-box motif (5'-CACGTG-3') and other cis-acting elements with 5'-ACGT-3' core, such as Hex, C-box and as-1 motifs. Possesses high binding affinity to G-box, much lower affinity to Hex and C-box, and little affinity to as-1 element. G-box and G-box-like motifs are cis-acting elements defined in promoters of certain plant genes which are regulated by such diverse stimuli as light-induction or hormone control. Binds to the G-box motif 5'-CACGTG-3' of LHCB2.4 (At3g27690) promoter. May act as transcriptional activator in light-regulated expression of LHCB2.4. Probably binds DNA as monomer. DNA-binding activity is redox-dependent. In Arabidopsis thaliana (Mouse-ear cress), this protein is bZIP transcription factor 68.